We begin with the raw amino-acid sequence, 442 residues long: Divalent metal cation transporter MntH (442 aa).

A run of 11 helical transmembrane segments spans residues 29–49 (MLAY…PGNW), 62–82 (TLLT…SLCV), 106–126 (FCLW…ELLG), 135–155 (FVIP…VLLF), 166–186 (ALVI…ILFS), 209–229 (MLYI…LYLH), 258–278 (FALS…AATF), 295–315 (LLSP…ALLA), 347–367 (LITR…FGEN), 372–392 (LIVL…IPLV), and 413–433 (LAWL…LQSL).

Belongs to the NRAMP family.

The protein resides in the cell inner membrane. Functionally, h(+)-stimulated, divalent metal cation uptake system. This chain is Divalent metal cation transporter MntH, found in Nostoc sp. (strain PCC 7120 / SAG 25.82 / UTEX 2576).